A 467-amino-acid chain; its full sequence is Asparagine--tRNA ligase (467 aa).

This sequence belongs to the class-II aminoacyl-tRNA synthetase family. As to quaternary structure, homodimer.

It localises to the cytoplasm. The catalysed reaction is tRNA(Asn) + L-asparagine + ATP = L-asparaginyl-tRNA(Asn) + AMP + diphosphate + H(+). The polypeptide is Asparagine--tRNA ligase (Haemophilus influenzae (strain ATCC 51907 / DSM 11121 / KW20 / Rd)).